The primary structure comprises 554 residues: Movement protein Hsp70h (554 aa).

It belongs to the heat shock protein 70 family.

The protein localises to the virion. Its function is as follows. Transports viral genome to neighboring plant cells directly through plasmosdesmata, without any budding. The movement protein allows efficient cell to cell propagation, by bypassing the host cell wall barrier. Two movement proteins, p6, Hsp70h and three structural proteins, CP, CPm, and P64 are essential for cell-cell movement. Also plays a role in virion formation. Together with CPm and p64, encapsidates the 5'-terminal portion of the viral genome. In Lettuce infectious yellows virus (isolate United States/92) (LIYV), this protein is Movement protein Hsp70h.